Consider the following 304-residue polypeptide: UDP-3-O-acyl-N-acetylglucosamine deacetylase (304 aa).

Residues His79, His238, and Asp242 each contribute to the Zn(2+) site. Catalysis depends on His265, which acts as the Proton donor.

The protein belongs to the LpxC family. Zn(2+) is required as a cofactor.

The catalysed reaction is a UDP-3-O-[(3R)-3-hydroxyacyl]-N-acetyl-alpha-D-glucosamine + H2O = a UDP-3-O-[(3R)-3-hydroxyacyl]-alpha-D-glucosamine + acetate. Its pathway is glycolipid biosynthesis; lipid IV(A) biosynthesis; lipid IV(A) from (3R)-3-hydroxytetradecanoyl-[acyl-carrier-protein] and UDP-N-acetyl-alpha-D-glucosamine: step 2/6. Functionally, catalyzes the hydrolysis of UDP-3-O-myristoyl-N-acetylglucosamine to form UDP-3-O-myristoylglucosamine and acetate, the committed step in lipid A biosynthesis. This is UDP-3-O-acyl-N-acetylglucosamine deacetylase from Photobacterium profundum (strain SS9).